The primary structure comprises 234 residues: Probable septum site-determining protein MinC (234 aa).

Belongs to the MinC family. As to quaternary structure, interacts with MinD and FtsZ.

In terms of biological role, cell division inhibitor that blocks the formation of polar Z ring septums. Rapidly oscillates between the poles of the cell to destabilize FtsZ filaments that have formed before they mature into polar Z rings. Prevents FtsZ polymerization. The sequence is that of Probable septum site-determining protein MinC from Pseudoalteromonas translucida (strain TAC 125).